We begin with the raw amino-acid sequence, 338 residues long: Lipoate-protein ligase A (338 aa).

In terms of domain architecture, BPL/LPL catalytic spans 29–216; it reads PATQRVLFLW…AFFAHYGERV (188 aa). ATP contacts are provided by residues R71, 76–79, and K134; that span reads GAVF. Residue K134 coordinates (R)-lipoate.

It belongs to the LplA family. In terms of assembly, monomer.

The protein resides in the cytoplasm. It carries out the reaction L-lysyl-[lipoyl-carrier protein] + (R)-lipoate + ATP = N(6)-[(R)-lipoyl]-L-lysyl-[lipoyl-carrier protein] + AMP + diphosphate + H(+). The protein operates within protein modification; protein lipoylation via exogenous pathway; protein N(6)-(lipoyl)lysine from lipoate: step 1/2. It functions in the pathway protein modification; protein lipoylation via exogenous pathway; protein N(6)-(lipoyl)lysine from lipoate: step 2/2. In terms of biological role, catalyzes both the ATP-dependent activation of exogenously supplied lipoate to lipoyl-AMP and the transfer of the activated lipoyl onto the lipoyl domains of lipoate-dependent enzymes. This Escherichia coli O1:K1 / APEC protein is Lipoate-protein ligase A.